The following is a 1004-amino-acid chain: Bifunctional glutamine synthetase adenylyltransferase/adenylyl-removing enzyme (1004 aa).

The segment at 1 to 497 (MCCTTVVVVR…LHAKLFYQPL (497 aa)) is adenylyl removase. The segment at 502–1004 (GPASLEIRHG…KTFVRKVFGS (503 aa)) is adenylyl transferase.

The protein belongs to the GlnE family. The cofactor is Mg(2+).

The catalysed reaction is [glutamine synthetase]-O(4)-(5'-adenylyl)-L-tyrosine + phosphate = [glutamine synthetase]-L-tyrosine + ADP. It carries out the reaction [glutamine synthetase]-L-tyrosine + ATP = [glutamine synthetase]-O(4)-(5'-adenylyl)-L-tyrosine + diphosphate. Involved in the regulation of glutamine synthetase GlnA, a key enzyme in the process to assimilate ammonia. When cellular nitrogen levels are high, the C-terminal adenylyl transferase (AT) inactivates GlnA by covalent transfer of an adenylyl group from ATP to specific tyrosine residue of GlnA, thus reducing its activity. Conversely, when nitrogen levels are low, the N-terminal adenylyl removase (AR) activates GlnA by removing the adenylyl group by phosphorolysis, increasing its activity. The regulatory region of GlnE binds the signal transduction protein PII (GlnB) which indicates the nitrogen status of the cell. The chain is Bifunctional glutamine synthetase adenylyltransferase/adenylyl-removing enzyme from Mycobacterium leprae (strain TN).